The chain runs to 178 residues: Putative magnesium-dependent phosphatase YER134C (178 aa).

Aspartate 11 serves as the catalytic Nucleophile. Residue aspartate 11 coordinates Mg(2+). Positions 12, 13, 74, and 75 each coordinate phosphate. Aspartate 13 serves as a coordination point for Mg(2+). The active-site Proton donor is aspartate 13. Arginine 75 is a substrate binding site. A Mg(2+)-binding site is contributed by aspartate 141.

The protein belongs to the HAD-like hydrolase superfamily.

It is found in the cytoplasm. It localises to the nucleus. The enzyme catalyses O-phospho-L-tyrosyl-[protein] + H2O = L-tyrosyl-[protein] + phosphate. Magnesium-dependent phosphatase which may act as a tyrosine phosphatase. The polypeptide is Putative magnesium-dependent phosphatase YER134C (Saccharomyces cerevisiae (strain ATCC 204508 / S288c) (Baker's yeast)).